A 194-amino-acid chain; its full sequence is ATP-dependent Clp protease proteolytic subunit (194 aa).

Catalysis depends on S98, which acts as the Nucleophile. The active site involves H123.

This sequence belongs to the peptidase S14 family. In terms of assembly, fourteen ClpP subunits assemble into 2 heptameric rings which stack back to back to give a disk-like structure with a central cavity, resembling the structure of eukaryotic proteasomes.

The protein resides in the cytoplasm. It carries out the reaction Hydrolysis of proteins to small peptides in the presence of ATP and magnesium. alpha-casein is the usual test substrate. In the absence of ATP, only oligopeptides shorter than five residues are hydrolyzed (such as succinyl-Leu-Tyr-|-NHMec, and Leu-Tyr-Leu-|-Tyr-Trp, in which cleavage of the -Tyr-|-Leu- and -Tyr-|-Trp bonds also occurs).. Functionally, cleaves peptides in various proteins in a process that requires ATP hydrolysis. Has a chymotrypsin-like activity. Plays a major role in the degradation of misfolded proteins. This is ATP-dependent Clp protease proteolytic subunit from Syntrophotalea carbinolica (strain DSM 2380 / NBRC 103641 / GraBd1) (Pelobacter carbinolicus).